We begin with the raw amino-acid sequence, 228 residues long: DNA mismatch repair protein MutH (228 aa).

The protein belongs to the MutH family.

The protein localises to the cytoplasm. In terms of biological role, sequence-specific endonuclease that cleaves unmethylated GATC sequences. It is involved in DNA mismatch repair. This Yersinia pseudotuberculosis serotype IB (strain PB1/+) protein is DNA mismatch repair protein MutH.